Reading from the N-terminus, the 91-residue chain is Anther-specific protein RTS (91 aa).

Positions 1-21 (MVRVGAAAAVLVLAAAAAAMA) are cleaved as a signal peptide.

Functionally, required for tapetum and pollen development. The sequence is that of Anther-specific protein RTS from Oryza sativa subsp. japonica (Rice).